Consider the following 330-residue polypeptide: Phenylalanine--tRNA ligase alpha subunit (330 aa).

Residue E257 coordinates Mg(2+).

It belongs to the class-II aminoacyl-tRNA synthetase family. Phe-tRNA synthetase alpha subunit type 1 subfamily. As to quaternary structure, tetramer of two alpha and two beta subunits. Mg(2+) serves as cofactor.

The protein localises to the cytoplasm. It carries out the reaction tRNA(Phe) + L-phenylalanine + ATP = L-phenylalanyl-tRNA(Phe) + AMP + diphosphate + H(+). This is Phenylalanine--tRNA ligase alpha subunit from Nostoc punctiforme (strain ATCC 29133 / PCC 73102).